The sequence spans 297 residues: tRNA pseudouridine synthase B (297 aa).

Asp-39 serves as the catalytic Nucleophile.

It belongs to the pseudouridine synthase TruB family. Type 1 subfamily.

It catalyses the reaction uridine(55) in tRNA = pseudouridine(55) in tRNA. Functionally, responsible for synthesis of pseudouridine from uracil-55 in the psi GC loop of transfer RNAs. The chain is tRNA pseudouridine synthase B from Lactobacillus acidophilus (strain ATCC 700396 / NCK56 / N2 / NCFM).